The primary structure comprises 478 residues: Adenosylhomocysteinase (478 aa).

Residues threonine 67, aspartate 144, and glutamate 204 each contribute to the substrate site. Residue 205-207 (TTT) coordinates NAD(+). The substrate site is built by lysine 234 and aspartate 238. NAD(+) contacts are provided by residues asparagine 239, 268-273 (GYGDVG), glutamate 291, asparagine 326, 347-349 (IGH), and asparagine 392.

It belongs to the adenosylhomocysteinase family. NAD(+) is required as a cofactor.

It localises to the cytoplasm. The enzyme catalyses S-adenosyl-L-homocysteine + H2O = L-homocysteine + adenosine. The protein operates within amino-acid biosynthesis; L-homocysteine biosynthesis; L-homocysteine from S-adenosyl-L-homocysteine: step 1/1. Functionally, may play a key role in the regulation of the intracellular concentration of adenosylhomocysteine. The sequence is that of Adenosylhomocysteinase from Nitrosomonas europaea (strain ATCC 19718 / CIP 103999 / KCTC 2705 / NBRC 14298).